The sequence spans 326 residues: Isoaspartyl peptidase/L-asparaginase (326 aa).

Thr-185 (nucleophile) is an active-site residue. Residues 213–216 (RVGD) and 236–239 (TGHG) contribute to the substrate site.

The protein belongs to the Ntn-hydrolase family. In terms of assembly, heterodimer of an alpha and beta chain produced by autocleavage. This heterodimer may then dimerize in turn, giving rise to a heterotetramer. In terms of processing, cleaved into an alpha and beta chain by autocatalysis; this activates the enzyme. The N-terminal residue of the beta subunit is responsible for the nucleophile hydrolase activity. In terms of tissue distribution, high expression in the heart and brain while low to minimal expression in the other tissues. In ocular tissues, high levels is observed in the optic nerve and retina while relatively low levels of expression are detected in the iris-ciliary body, lens or retinal pigment epithelium.

The protein localises to the cytoplasm. The enzyme catalyses L-asparagine + H2O = L-aspartate + NH4(+). It catalyses the reaction Cleavage of a beta-linked Asp residue from the N-terminus of a polypeptide.. Has both L-asparaginase and beta-aspartyl peptidase activity. May be involved in the production of L-aspartate, which can act as an excitatory neurotransmitter in some brain regions. Is highly active with L-Asp beta-methyl ester. Besides, has catalytic activity toward beta-aspartyl dipeptides and their methyl esters, including beta-L-Asp-L-Phe, beta-L-Asp-L-Phe methyl ester (aspartame), beta-L-Asp-L-Ala, beta-L-Asp-L-Leu and beta-L-Asp-L-Lys. Does not have aspartylglucosaminidase activity and is inactive toward GlcNAc-L-Asn. Likewise, has no activity toward glutamine. The protein is Isoaspartyl peptidase/L-asparaginase (Asrgl1) of Mus musculus (Mouse).